The primary structure comprises 220 residues: Metalloproteinase inhibitor 2 (220 aa).

The first 26 residues, 1–26 (MGAAARSLRLALGLLLLATLPRPADA), serve as a signal peptide directing secretion. Position 27 (Cys-27) interacts with Zn(2+). Involved in metalloproteinase-binding regions lie at residues 27 to 30 (CSCS) and 95 to 96 (SA). Intrachain disulfides connect Cys-27-Cys-98, Cys-29-Cys-127, Cys-39-Cys-152, Cys-154-Cys-201, Cys-159-Cys-164, and Cys-172-Cys-193. One can recognise an NTR domain in the interval 27 to 152 (CSCSPVHPQQ…SLNHRYQMGC (126 aa)).

The protein belongs to the protease inhibitor I35 (TIMP) family. Interacts (via the C-terminal) with MMP2 (via the C-terminal PEX domain); the interaction inhibits the MMP2 activity. In terms of processing, the activity of TIMP2 is dependent on the presence of disulfide bonds.

The protein localises to the secreted. Functionally, complexes with metalloproteinases (such as collagenases) and irreversibly inactivates them by binding to their catalytic zinc cofactor. This chain is Metalloproteinase inhibitor 2 (TIMP2), found in Canis lupus familiaris (Dog).